A 633-amino-acid polypeptide reads, in one-letter code: tRNA uridine 5-carboxymethylaminomethyl modification enzyme MnmG (633 aa).

FAD is bound by residues 15 to 20, isoleucine 127, and serine 182; that span reads GAGHAG. 276–290 serves as a coordination point for NAD(+); sequence GPRYCPSIEDKIVRF. FAD is bound at residue glutamine 373.

The protein belongs to the MnmG family. As to quaternary structure, homodimer. Heterotetramer of two MnmE and two MnmG subunits. FAD serves as cofactor.

It is found in the cytoplasm. Functionally, NAD-binding protein involved in the addition of a carboxymethylaminomethyl (cmnm) group at the wobble position (U34) of certain tRNAs, forming tRNA-cmnm(5)s(2)U34. This Streptococcus agalactiae serotype III (strain NEM316) protein is tRNA uridine 5-carboxymethylaminomethyl modification enzyme MnmG.